Reading from the N-terminus, the 264-residue chain is 2-dehydro-3-deoxy-D-gluconate 5-dehydrogenase (264 aa).

NAD(+) is bound at residue 14–38 (LVTGSTHGLGMAMAKGLGLAGATIV). A substrate-binding site is contributed by S147. Y160 (proton acceptor) is an active-site residue.

The protein belongs to the short-chain dehydrogenases/reductases (SDR) family. In terms of assembly, homotetramer.

Its subcellular location is the cytoplasm. The enzyme catalyses 2-dehydro-3-deoxy-D-gluconate + NAD(+) = 3-deoxy-D-glycero-2,5-hexodiulosonate + NADH + H(+). In terms of biological role, 2-dehydro-3-deoxy-D-gluconate 5-dehydrogenase involved in ulvan degradation. Ulvan is the main polysaccharide component of the Ulvales (green seaweed) cell wall. It is composed of disaccharide building blocks comprising 3-sulfated rhamnose (Rha3S) linked to D-glucuronic acid (GlcA), L-iduronic acid (IduA), or D-xylose (Xyl). Catalyzes the reversible reduction of 2,5-diketo-3-deoxygluconate (DKII or 4,6-dihydroxy-2,5-dioxohexanoate) into 2-keto-3-deoxygluconate (KDG or 2-dehydro-3-deoxygluconate) with a concomitant oxidation of NADH. The chain is 2-dehydro-3-deoxy-D-gluconate 5-dehydrogenase (kduD) from Formosa agariphila (strain DSM 15362 / KCTC 12365 / LMG 23005 / KMM 3901 / M-2Alg 35-1).